Consider the following 244-residue polypeptide: tRNA pseudouridine synthase A (244 aa).

The Nucleophile role is filled by D52. Position 110 (Y110) interacts with substrate.

This sequence belongs to the tRNA pseudouridine synthase TruA family. Homodimer.

It catalyses the reaction uridine(38/39/40) in tRNA = pseudouridine(38/39/40) in tRNA. In terms of biological role, formation of pseudouridine at positions 38, 39 and 40 in the anticodon stem and loop of transfer RNAs. The sequence is that of tRNA pseudouridine synthase A from Clostridium acetobutylicum (strain ATCC 824 / DSM 792 / JCM 1419 / IAM 19013 / LMG 5710 / NBRC 13948 / NRRL B-527 / VKM B-1787 / 2291 / W).